Reading from the N-terminus, the 88-residue chain is Prolevitide (88 aa).

The N-terminal stretch at 1–20 (MYKGIFLCVLFAVICANSLA) is a signal peptide. Gln-74 bears the Pyrrolidone carboxylic acid mark. Gln-87 is subject to Glutamine amide.

This sequence belongs to the gastrin/cholecystokinin family. As to expression, expressed by the skin glands.

Its subcellular location is the secreted. The polypeptide is Prolevitide (Xenopus laevis (African clawed frog)).